The chain runs to 434 residues: Methylenetetrahydrofolate--tRNA-(uracil-5-)-methyltransferase TrmFO (434 aa).

10–15 (GAGLAG) is a binding site for FAD.

It belongs to the MnmG family. TrmFO subfamily. It depends on FAD as a cofactor.

It localises to the cytoplasm. The enzyme catalyses uridine(54) in tRNA + (6R)-5,10-methylene-5,6,7,8-tetrahydrofolate + NADH + H(+) = 5-methyluridine(54) in tRNA + (6S)-5,6,7,8-tetrahydrofolate + NAD(+). It carries out the reaction uridine(54) in tRNA + (6R)-5,10-methylene-5,6,7,8-tetrahydrofolate + NADPH + H(+) = 5-methyluridine(54) in tRNA + (6S)-5,6,7,8-tetrahydrofolate + NADP(+). In terms of biological role, catalyzes the folate-dependent formation of 5-methyl-uridine at position 54 (M-5-U54) in all tRNAs. This chain is Methylenetetrahydrofolate--tRNA-(uracil-5-)-methyltransferase TrmFO, found in Bacillus cereus (strain AH820).